Reading from the N-terminus, the 738-residue chain is Adhesion G protein-coupled receptor L4 (738 aa).

The N-terminal stretch at 1-19 is a signal peptide; that stretch reads MRLLLLLVGLSTLLNHSYT. The EGF-like 1 domain occupies 20 to 56; sequence QNCKTPCLPNAKCEVLDEVAACFCSTGYTGNGITICE. At 20–480 the chain is on the extracellular side; it reads QNCKTPCLPN…DYNILTRITQ (461 aa). Cystine bridges form between cysteine 22-cysteine 32, cysteine 26-cysteine 41, cysteine 43-cysteine 55, cysteine 61-cysteine 73, cysteine 67-cysteine 82, cysteine 84-cysteine 105, cysteine 111-cysteine 123, cysteine 117-cysteine 132, and cysteine 134-cysteine 155. Positions 57-106 constitute an EGF-like 2; calcium-binding domain; sequence DVDECNETSVCGDHAVCENTNGGFSCFCVEGYQTSTGKTQFTPNDGSYCQ. The N-linked (GlcNAc...) asparagine glycan is linked to asparagine 62. Residues 107 to 156 form the EGF-like 3; calcium-binding domain; sequence DVDECNETSVCGDHAVCENTNGGFSCFCVEGYQTSTGKTQFTPNDGSYCQ. An N-linked (GlcNAc...) asparagine glycan is attached at asparagine 112. N-linked (GlcNAc...) asparagine glycosylation is found at asparagine 175, asparagine 226, asparagine 297, asparagine 421, asparagine 429, and asparagine 443. The region spanning 292–467 is the GAIN-B domain; it reads TQFDMNSTDL…AILMSPSTSI (176 aa). Cystine bridges form between cysteine 417–cysteine 449 and cysteine 437–cysteine 451. Residues 417–467 are GPS; sequence CAFWNYSVDDMNNGSWSSEGCELTYSNDTHTSCRCSHLTHFAILMSPSTSI. Residues 481 to 501 traverse the membrane as a helical segment; sequence LGIIISLICLAICIFTFWFFS. At 502 to 522 the chain is on the cytoplasmic side; that stretch reads EIQSTRTTIHKNLCCSLFLAQ. A helical membrane pass occupies residues 523–543; it reads LVFLVGININTNKLVCSIIAG. Topologically, residues 544–547 are extracellular; sequence LLHY. The chain crosses the membrane as a helical span at residues 548–568; that stretch reads FFLAAFAWMCIEGIYLYLIVV. At 569 to 580 the chain is on the cytoplasmic side; it reads GLIYNKGFLHKN. A helical membrane pass occupies residues 581 to 601; the sequence is FYIFGYLSPAVVVGFSASLGY. At 602-621 the chain is on the extracellular side; it reads RYYGTTKVCWLSTENNFIWS. A helical transmembrane segment spans residues 622–642; that stretch reads FIGPACLIILVNLLAFGVIIY. Topologically, residues 643 to 666 are cytoplasmic; it reads KVFRHTAGLKPEVSCYENIRSCAR. Residues 667-687 traverse the membrane as a helical segment; sequence GALALLFLLGTTWTFGVLHVV. Topologically, residues 688–694 are extracellular; that stretch reads HASVVTA. Residues 695-715 form a helical membrane-spanning segment; the sequence is YLFTVSNAFQGMFIFLFLCVL. Topologically, residues 716 to 738 are cytoplasmic; it reads SRKIQEEYYRLFKNVPCCFECLR.

This sequence belongs to the G-protein coupled receptor 2 family. Adhesion G-protein coupled receptor (ADGR) subfamily. In terms of assembly, heterodimer of 2 chains generated by proteolytic processing; the large extracellular N-terminal fragment and the membrane-bound C-terminal fragment predominantly remain associated and non-covalently linked. In terms of processing, proteolytically cleaved into 2 subunits, an extracellular alpha subunit and a seven-transmembrane subunit. Post-translationally, glycosylated. Abundantly expressed in heart, lung, and kidney. Less evident expression is observed in brain, skeletal muscle, liver and spleen. No expression is detected in testis.

It is found in the cell membrane. Its function is as follows. Endothelial orphan receptor that acts as a key regulator of angiogenesis. This chain is Adhesion G protein-coupled receptor L4 (Adgrl4), found in Rattus norvegicus (Rat).